We begin with the raw amino-acid sequence, 226 residues long: MTSGGGYGDPSQKIDYVFKVVLIGDSAVGKSQILARYARDEFSLDSKATIGVEFQTRTLVIDHKSVKAQIWDTAGQERYRAVTSAYYRGAVGAMLVYDITRRQTFDHIPRWLEELRAHADKNIVIILIGNKSDLVDQRAIPTEDAKEFAEKEGLFFLETSAFNATNVESAFSTVLTEIFNIVNKKSLAASEDQENGNPGSLAGKKIDIVPGPGQVIPNKSNMCCNS.

At Thr2 the chain carries N-acetylthreonine. 24–31 (GDSAVGKS) serves as a coordination point for GTP. Positions 46 to 54 (SKATIGVEF) match the Effector region motif. Residues 72-76 (DTAGQ), 130-133 (NKSD), and 160-161 (SA) each bind GTP. The tract at residues 189-226 (ASEDQENGNPGSLAGKKIDIVPGPGQVIPNKSNMCCNS) is disordered. Positions 217 to 226 (PNKSNMCCNS) are enriched in polar residues. S-geranylgeranyl cysteine attachment occurs at residues Cys223 and Cys224.

Belongs to the small GTPase superfamily. Rab family. Interacts with TCTP1.

The protein localises to the cell membrane. Its function is as follows. Intracellular vesicle trafficking and protein transport. This is Ras-related protein RABA4a from Arabidopsis thaliana (Mouse-ear cress).